Here is a 337-residue protein sequence, read N- to C-terminus: Inositol 2-dehydrogenase (337 aa).

This sequence belongs to the Gfo/Idh/MocA family. Homotetramer.

It carries out the reaction myo-inositol + NAD(+) = scyllo-inosose + NADH + H(+). Functionally, involved in the oxidation of myo-inositol (MI) to 2-keto-myo-inositol (2KMI or 2-inosose). This Burkholderia vietnamiensis (strain G4 / LMG 22486) (Burkholderia cepacia (strain R1808)) protein is Inositol 2-dehydrogenase.